The primary structure comprises 416 residues: Pentraxin fusion protein (416 aa).

Positions 1–14 are cleaved as a signal peptide; sequence MKSLLLFLKSQVFG. A glycan (N-linked (GlcNAc...) asparagine) is linked at Asn-129. Residues 184–206 form a disordered region; sequence GTEASDSSESVDGTEAPASPESD. A Pentraxin (PTX) domain is found at 220-416; it reads TNKSFMFPKE…YSMIGNVAEV (197 aa). Asn-221 carries N-linked (GlcNAc...) asparagine glycosylation. Cysteines 251 and 311 form a disulfide. The Ca(2+) site is built by Asp-275, Gln-353, Asp-354, and Gln-364.

Requires Ca(2+) as cofactor.

This Xenopus laevis (African clawed frog) protein is Pentraxin fusion protein (pxn1).